A 150-amino-acid polypeptide reads, in one-letter code: UPF0039 protein C11D3.02c (150 aa).

The N-acetyltransferase domain maps to 9–150 (KYFNSLDVKE…IPHVEMRLEL (142 aa)).

Belongs to the UPF0039 (ElaA) family.

In Schizosaccharomyces pombe (strain 972 / ATCC 24843) (Fission yeast), this protein is UPF0039 protein C11D3.02c.